Reading from the N-terminus, the 228-residue chain is MTKRYFVTGTDTEVGKTVASCALLQAATQLGYQTVGYKPVASGSEMTTDGLRNSDALALQRNSSLPQPYSAINPYTFAEPTSPHIVSADEGRAIDAAVLSRGLRTLEAQADWVLTEGAGGWFTPLSATLTFADWVQTEQLPVILVVGVKLGCINHAMLTALAVEQAGLPLVGWIANDIQPPGARHGEYLATLRRVIPAPLLGEIPWLGVSPSQAATGQYLDLSPLERA.

13–18 (EVGKTV) provides a ligand contact to ATP. Thr-17 serves as a coordination point for Mg(2+). Lys-38 is a catalytic residue. Ser-42 provides a ligand contact to substrate. ATP-binding positions include Asp-55, 116–119 (EGAG), 176–177 (ND), and 205–207 (PWL). Mg(2+) is bound by residues Asp-55 and Glu-116.

This sequence belongs to the dethiobiotin synthetase family. As to quaternary structure, homodimer. Requires Mg(2+) as cofactor.

The protein localises to the cytoplasm. The catalysed reaction is (7R,8S)-7,8-diammoniononanoate + CO2 + ATP = (4R,5S)-dethiobiotin + ADP + phosphate + 3 H(+). Its pathway is cofactor biosynthesis; biotin biosynthesis; biotin from 7,8-diaminononanoate: step 1/2. Its function is as follows. Catalyzes a mechanistically unusual reaction, the ATP-dependent insertion of CO2 between the N7 and N8 nitrogen atoms of 7,8-diaminopelargonic acid (DAPA, also called 7,8-diammoniononanoate) to form a ureido ring. The polypeptide is ATP-dependent dethiobiotin synthetase BioD 1 (Salmonella typhimurium (strain LT2 / SGSC1412 / ATCC 700720)).